A 502-amino-acid polypeptide reads, in one-letter code: 4,4'-diapophytoene desaturase (4,4'-diaponeurosporene-forming) (502 aa).

5–17 (VIGAGVTGLAAAA) is an FAD binding site.

The protein belongs to the carotenoid/retinoid oxidoreductase family. CrtN subfamily.

The enzyme catalyses 15-cis-4,4'-diapophytoene + 3 FAD + 3 H(+) = all-trans-4,4'-diaponeurosporene + 3 FADH2. It participates in carotenoid biosynthesis; staphyloxanthin biosynthesis; staphyloxanthin from farnesyl diphosphate: step 2/5. Functionally, involved in the biosynthesis of the yellow-orange carotenoid staphyloxanthin, which plays a role in the virulence via its protective function against oxidative stress. Catalyzes three successive dehydrogenation reactions that lead to the introduction of three double bonds into 4,4'-diapophytoene (dehydrosqualene), with 4,4'-diapophytofluene and 4,4'-diapo-zeta-carotene as intermediates, and 4,4'-diaponeurosporene (the major deep-yellow pigment in staphylococci strains) as the end product. The chain is 4,4'-diapophytoene desaturase (4,4'-diaponeurosporene-forming) from Staphylococcus aureus (strain MW2).